The following is a 201-amino-acid chain: Probable GTP-binding protein EngB (201 aa).

The 175-residue stretch at 25–199 (HGIEIAFIGY…KSKLNFWYEK (175 aa)) folds into the EngB-type G domain. GTP is bound by residues 33–40 (GYSNSGKS), 60–64 (GRTQL), 78–81 (DLPG), 145–148 (TKCD), and 178–180 (FSS). Residues Ser-40 and Thr-62 each coordinate Mg(2+).

This sequence belongs to the TRAFAC class TrmE-Era-EngA-EngB-Septin-like GTPase superfamily. EngB GTPase family. The cofactor is Mg(2+).

Functionally, necessary for normal cell division and for the maintenance of normal septation. This chain is Probable GTP-binding protein EngB, found in Buchnera aphidicola subsp. Schizaphis graminum (strain Sg).